A 418-amino-acid chain; its full sequence is Ciliary microtubule-associated protein 2 (418 aa).

In terms of tissue distribution, sperm.

The polypeptide is Ciliary microtubule-associated protein 2 (Homo sapiens (Human)).